Reading from the N-terminus, the 403-residue chain is MKFIDESLIRIEAGDGGNGCVSFRREKFIPKGGPDGGDGGDGGDVYLQADENLNTLIDYRFNKRFAAERGENGRSSDCTGRRGKDIILPVPVGTRAIDNDTKETLGDLTQHGQKMLVAKGGYHGLGNTRFKSSVNRAPRQKTMGTPGEKRDLLLELMLLADVGMLGFPNAGKSTFIRAVSAAKPKVADYPFTTLVPSLGVVKVDDSHSFVVADIPGLIEGAADGAGLGIRFLKHLERCRVLIHLVDIAPIDGSNPADNVAIIESELFQYSEKLSEKPRWLVFNKIDTMSDEEAEERVREITEQLGWEEDYYLISAATGKNVPPLCRDIMDFIIANPREAETQQVAPEEVKFKWEDYHQEQLAEYQFDDDEDWDDDWTEEDDDEDWDDDWTEEDDEGIEFIYKP.

Residues 1-159 (MKFIDESLIR…RDLLLELMLL (159 aa)) enclose the Obg domain. Residues 160–333 (ADVGMLGFPN…LCRDIMDFII (174 aa)) enclose the OBG-type G domain. GTP-binding positions include 166 to 173 (GFPNAGKS), 191 to 195 (FTTLV), 213 to 216 (DIPG), 283 to 286 (NKID), and 314 to 316 (SAA). Residues serine 173 and threonine 193 each coordinate Mg(2+). The disordered stretch occupies residues 363-403 (EYQFDDDEDWDDDWTEEDDDEDWDDDWTEEDDEGIEFIYKP). The segment covering 365 to 397 (QFDDDEDWDDDWTEEDDDEDWDDDWTEEDDEGI) has biased composition (acidic residues).

The protein belongs to the TRAFAC class OBG-HflX-like GTPase superfamily. OBG GTPase family. Monomer. The cofactor is Mg(2+).

The protein localises to the cytoplasm. An essential GTPase which binds GTP, GDP and possibly (p)ppGpp with moderate affinity, with high nucleotide exchange rates and a fairly low GTP hydrolysis rate. Plays a role in control of the cell cycle, stress response, ribosome biogenesis and in those bacteria that undergo differentiation, in morphogenesis control. The protein is GTPase Obg of Haemophilus influenzae (strain PittEE).